The primary structure comprises 369 residues: Aspartate beta-hydroxylase domain-containing protein 2 (369 aa).

The Cytoplasmic segment spans residues 1 to 58; that stretch reads MVWAPLGPPRTDCLTLLHTPSKDSPKMSLEWLVAWSWSLDGLRDCIATGIQSVRDCDT. The chain crosses the membrane as a helical span at residues 59-79; the sequence is TAVITVACLLVLFVWYCYHVG. Residues 80–369 lie on the Lumenal side of the membrane; it reads REQPRPYVSV…ALDFIFAPGR (290 aa). N-linked (GlcNAc...) asparagine glycosylation occurs at Asn211. 2-oxoglutarate contacts are provided by Trp228 and Ser272. His283 is a Fe cation binding site. A 2-oxoglutarate-binding site is contributed by 292-294; that stretch reads RCH. His328 contributes to the Fe cation binding site. Arg341 is a 2-oxoglutarate binding site.

The protein belongs to the aspartyl/asparaginyl beta-hydroxylase family. Fe cation serves as cofactor.

It localises to the membrane. In terms of biological role, may function as 2-oxoglutarate-dependent dioxygenase. This chain is Aspartate beta-hydroxylase domain-containing protein 2 (ASPHD2), found in Homo sapiens (Human).